Consider the following 330-residue polypeptide: MSDSEKLNLDSIIGRLLEVQGSRPGKNVQLTENEIRGLCLKSREIFLSQPILLELEAPLKICGDIHGQYYDLLRLFEYGGFPPESNYLFLGDYVDRGKQSLETICLLLAYKIKYPENFFLLRGNHECASINRIYGFYDECKRRYNIKLWKTFTDXFNXLPIAAIVDEKIFCCHGGLSPDLQSMEQIRRIMRPTDVPDQGLLCDLLWSDPDKDVQGWGENDRGVSFTFGAEVVAKFLHKHDLDLICRAHQVVEDGYEFFAKRQLVTLFSAPNYCGEFDNAGAMMSVDETLMCSFQILKPADKNKGKYGQFSGLNPGGRPITPPRNSAKAKK.

The residue at position 2 (Ser2) is an N-acetylserine. Phosphoserine is present on residues Ser2 and Ser22. Residues Asp64, His66, Asp92, and Asn124 each coordinate Mn(2+). His125 functions as the Proton donor in the catalytic mechanism. Mn(2+) contacts are provided by His173 and His248. Lys305 is modified (N6-acetyllysine). Residue Tyr306 is modified to Phosphotyrosine. The tract at residues 306–330 (YGQFSGLNPGGRPITPPRNSAKAKK) is disordered. At Thr320 the chain carries Phosphothreonine. Ser325 is modified (phosphoserine).

It belongs to the PPP phosphatase family. PP-1 subfamily. In terms of assembly, PP1 comprises a catalytic subunit, PPP1CA, PPP1CB or PPP1CC, which is folded into its native form by inhibitor 2 and glycogen synthetase kinase 3, and then complexed to one or several targeting or regulatory subunits. PPP1R12A, PPP1R12B and PPP1R12C mediate binding to myosin. PPP1R3A (in skeletal muscle), PPP1R3B (in liver), PPP1R3C, PPP1R3D and PPP1R3F (in brain) mediate binding to glycogen. Interacts with PPP1R15A and PPP1R15B; the interactions mediate binding to EIF2S1. Part of a complex containing PPP1R15B, PP1 and NCK1/2. Interacts with PPP1R9A, PPP1R9B and PPP1R7. Interacts with YLPM1. Forms a complex with ILF2, ILF3, YLPM1, KHDRBS1, RBMX and NCOA5. Interacts with NOM1 and PPP1R8. Interacts with PPP1R16B. Interacts with RPSA only in the presence of PPP1R16B. Component of the PNUTS-PP1 phosphatase complex, composed of PPP1R10/PNUTS, TOX4, WDR82, and PPP1CA or PPP1CB or PPP1CC. Interacts with PPP1R10/PNUTS and PPP1R8. Interacts with WDR82 in the presence of PPP1R10/PNUTS. Interacts with PPP1R39. transition from mitosis into interphase. Interacts with TRIM28; the interaction dephosphorylates TRIM28 on 'Ser-824' and forms a complex at the p21 promoter site. Interacts with NEK2. Interacts with PHACTR4; which acts as an activator of PP1 activity. Interacts with FER; this promotes phosphorylation at Thr-320. Interacts with BTBD10. Interacts with KCTD20. Interacts with FOXP3. Interacts with CENPA. Interacts with ATG16L1. Found in a complex with PPP1CA, PPP1CC, SHC1 and PEAK1. Interacts with tensin TNS1. Interacts with SAXO4, PPP1R21, PPP1R26, PPP1R27, PPP1R35, PPP1R36, PPP1R37, SH3RF2, ELFN1 and ELFN2. Interacts with TPRN; the interaction results in inhibition of PPC1A phosphatase activity. Interacts with SKA1 (via C-terminus); the interaction is direct and required for the recruitment of PP1 to the kinetochore. Interacts with the KNL1 complex subunit KNL1; the interaction is direct and mutually exclusive with KNL1 binding to microtubules. Component of the SHOC2-MRAS-PP1c (SMP) complex consisting of SHOC2, GTP-bound M-Ras/MRAS and the catalytic subunit of protein phosphatase 1 (either PPP1CA, PPP1CB or PPP1CC). SHOC2 and PP1c preferably bind M-Ras/MRAS, but they also bind K-Ras/KRAS, N-Ras/NRAS and H-Ras/HRAS; these interactions are GTP-dependent and both SHOC2 and PP1c are required to form a stable complex. Interacts with SHOC2 in the absence of Ras GTPases. Mn(2+) serves as cofactor. In terms of processing, phosphorylated. Dephosphorylated at Thr-320 in the presence of ionizing radiation.

Its subcellular location is the cytoplasm. It is found in the nucleus. The protein resides in the nucleoplasm. It localises to the nucleolus. The catalysed reaction is O-phospho-L-seryl-[protein] + H2O = L-seryl-[protein] + phosphate. It carries out the reaction O-phospho-L-threonyl-[protein] + H2O = L-threonyl-[protein] + phosphate. Its function is as follows. Protein phosphatase that associates with over 200 regulatory proteins to form highly specific holoenzymes which dephosphorylate hundreds of biological targets. Protein phosphatase 1 (PP1) is essential for cell division, transcription elongation, and participates in the regulation of glycogen metabolism, muscle contractility and protein synthesis. Involved in regulation of ionic conductances and long-term synaptic plasticity. May play an important role in dephosphorylating substrates such as the postsynaptic density-associated Ca(2+)/calmodulin dependent protein kinase II. Catalytic component of the PNUTS-PP1 protein phosphatase complex, a protein phosphatase 1 (PP1) complex that promotes RNA polymerase II transcription pause-release, allowing transcription elongation: the PNUTS-PP1 complex mediates the release of RNA polymerase II from promoter-proximal region of genes by catalyzing dephosphorylation of proteins involved in transcription, such as AFF4, CDK9, MEPCE, INTS12, NCBP1, POLR2M/GDOWN1 and SUPT6H. The PNUTS-PP1 complex also regulates transcription termination by mediating dephosphorylation of SUPT5H in termination zones downstream of poly(A) sites, thereby promoting deceleration of RNA polymerase II transcription. PNUTS-PP1 complex is also involved in the response to replication stress by mediating dephosphorylation of POLR2A at 'Ser-5' of the CTD, promoting RNA polymerase II degradation. PNUTS-PP1 also plays a role in the control of chromatin structure and cell cycle progression during the transition from mitosis into interphase. Regulates NEK2 function in terms of kinase activity and centrosome number and splitting, both in the presence and absence of radiation-induced DNA damage. Regulator of neural tube and optic fissure closure, and enteric neural crest cell (ENCCs) migration during development. In balance with CSNK1D and CSNK1E, determines the circadian period length, through the regulation of the speed and rhythmicity of PER1 and PER2 phosphorylation. May dephosphorylate CSNK1D and CSNK1E. Dephosphorylates the 'Ser-418' residue of FOXP3 in regulatory T-cells (Treg) from patients with rheumatoid arthritis, thereby inactivating FOXP3 and rendering Treg cells functionally defective. Dephosphorylates CENPA. Dephosphorylates the 'Ser-139' residue of ATG16L1 causing dissociation of ATG12-ATG5-ATG16L1 complex, thereby inhibiting autophagy. Together with PPP1CC (PP1-gamma subunit), dephosphorylates IFIH1/MDA5 and RIG-I leading to their activation and a functional innate immune response. Core component of the SHOC2-MRAS-PP1c (SMP) holophosphatase complex that regulates the MAPK pathway activation. The SMP complex specifically dephosphorylates the inhibitory phosphorylation at 'Ser-259' of RAF1 kinase, 'Ser-365' of BRAF kinase and 'Ser-214' of ARAF kinase, stimulating their kinase activities. The SMP complex enhances the dephosphorylation activity and substrate specificity of PP1c. The chain is Serine/threonine-protein phosphatase PP1-alpha catalytic subunit (PPP1CA) from Canis lupus familiaris (Dog).